Consider the following 293-residue polypeptide: Delta(3,5)-Delta(2,4)-dienoyl-CoA isomerase, mitochondrial (293 aa).

Residues 84–88 and Gly-142 each bind substrate; that span reads AGLNL.

The protein belongs to the enoyl-CoA hydratase/isomerase family.

It is found in the mitochondrion. It carries out the reaction (3E,5Z)-octadienoyl-CoA = (2E,4E)-octadienoyl-CoA. The enzyme catalyses (3E,5Z,8Z,11Z,14Z)-eicosapentaenoyl-CoA = (2E,4E,8Z,11Z,14Z)-eicosapentaenoyl-CoA. The protein operates within lipid metabolism; fatty acid beta-oxidation. Its function is as follows. Isomerization of 3-trans,5-cis-dienoyl-CoA to 2-trans,4-trans-dienoyl-CoA. The sequence is that of Delta(3,5)-Delta(2,4)-dienoyl-CoA isomerase, mitochondrial (ech1) from Dictyostelium discoideum (Social amoeba).